The sequence spans 181 residues: Peptidyl-tRNA hydrolase (181 aa).

Tyr-14 contributes to the tRNA binding site. His-19 acts as the Proton acceptor in catalysis. Residues Tyr-62, Asn-64, and Asn-108 each contribute to the tRNA site.

The protein belongs to the PTH family. Monomer.

The protein resides in the cytoplasm. It catalyses the reaction an N-acyl-L-alpha-aminoacyl-tRNA + H2O = an N-acyl-L-amino acid + a tRNA + H(+). Hydrolyzes ribosome-free peptidyl-tRNAs (with 1 or more amino acids incorporated), which drop off the ribosome during protein synthesis, or as a result of ribosome stalling. Functionally, catalyzes the release of premature peptidyl moieties from peptidyl-tRNA molecules trapped in stalled 50S ribosomal subunits, and thus maintains levels of free tRNAs and 50S ribosomes. The sequence is that of Peptidyl-tRNA hydrolase from Campylobacter jejuni (strain RM1221).